A 556-amino-acid polypeptide reads, in one-letter code: Polypeptide N-acetylgalactosaminyltransferase 13 (556 aa).

Topologically, residues 1-4 (MRRF) are cytoplasmic. The chain crosses the membrane as a helical; Signal-anchor for type II membrane protein span at residues 5–27 (VYCKVVLATSLMWVLVDVFLLLY). Residues 28–556 (FSECNKCDDK…WLLRNMTLGT (529 aa)) lie on the Lumenal side of the membrane. Asparagine 94 and asparagine 116 each carry an N-linked (GlcNAc...) asparagine glycan. Cystine bridges form between cysteine 105-cysteine 338, cysteine 329-cysteine 407, cysteine 441-cysteine 458, cysteine 481-cysteine 496, and cysteine 522-cysteine 539. The tract at residues 114-224 (LPNTSVVIVF…LGWLEPLLAR (111 aa)) is catalytic subdomain A. Positions 155 and 185 each coordinate substrate. Mn(2+)-binding residues include aspartate 208 and histidine 210. The catalytic subdomain B stretch occupies residues 284 to 346 (PVRTPTMAGG…TCSHVGHVFR (63 aa)). Position 315 (tryptophan 315) interacts with substrate. Histidine 343 serves as a coordination point for Mn(2+). Residues arginine 346 and tyrosine 351 each coordinate substrate. In terms of domain architecture, Ricin B-type lectin spans 428–550 (YSLGEIRNVE…GSRSQQWLLR (123 aa)). The N-linked (GlcNAc...) asparagine glycan is linked to asparagine 551.

Belongs to the glycosyltransferase 2 family. GalNAc-T subfamily. It depends on Mn(2+) as a cofactor. Specifically expressed in neuronal cells. Expressed in fetal brain, whole adult brain, cerebral cortex and cerebellum. Not expressed in other tissues tested.

It is found in the golgi apparatus membrane. The enzyme catalyses L-seryl-[protein] + UDP-N-acetyl-alpha-D-galactosamine = a 3-O-[N-acetyl-alpha-D-galactosaminyl]-L-seryl-[protein] + UDP + H(+). It carries out the reaction L-threonyl-[protein] + UDP-N-acetyl-alpha-D-galactosamine = a 3-O-[N-acetyl-alpha-D-galactosaminyl]-L-threonyl-[protein] + UDP + H(+). The protein operates within protein modification; protein glycosylation. Catalyzes the initial reaction in O-linked oligosaccharide biosynthesis, the transfer of an N-acetyl-D-galactosamine (GalNAc) residue from UDP-GalNAc to a serine or threonine residue on the protein receptor. Generates GalNAc-O-Ser/Thr structure also known as Tn antigen, which itself is immunogenic but also serves as a precursor for the synthesis of different mucin-type O-glycan core structures. Contributes to the synthesis of O-linked glycans on mucins and proteoglycans of the central nervous system. May promote neurogenesis through glycosylation and stabilization of PDPN. Its function is as follows. Can glycosylate both unmodified peptides and glycopeptides that already contain an O-linked GalNAc sugar. Transfers GalNAc to Thr-/Ser-rich tandem repeats GTTPSPVPTTSTTSAP of MUC5AC, specifically on Thr-3 of non-glycosylated MUC5AC peptide, on Thr-12 and Thr-13 of preglycosylated MUC5AC at Thr-3 (MUC5AC-3), on Thr-3 of preglycosylated MUC5AC at Thr-13 (MUC5AC-13) and on Thr-12 of preglycosylated MUC5AC at Thr-3 and Thr-13 (MUC5AC-3,13). Transfers GalNAc to three consecutive serine/threonine residues on SDC3 forming a triplet-Tn epitope expressed in Purkinje cells of the developing brain. In terms of biological role, can glycosylate both unmodified peptides and glycopeptides that already contain an O-linked GalNAc sugar. Transfers GalNAc to Thr-/Ser-rich tandem repeats GTTPSPVPTTSTTSAP of MUC5AC, specifically on Thr-3 of non-glycosylated MUC5AC peptide, on Thr-12 and Thr-13 of preglycosylated MUC5AC at Thr-3 (MUC5AC-3), on Thr-3 of preglycosylated MUC5AC at Thr-13 (MUC5AC-13) and on Thr-12 of preglycosylated MUC5AC at Thr-3 and Thr-13 (MUC5AC-3,13). This is Polypeptide N-acetylgalactosaminyltransferase 13 (GALNT13) from Homo sapiens (Human).